A 299-amino-acid polypeptide reads, in one-letter code: Probable transport accessory protein MmpS3 (299 aa).

The segment at 1 to 72 is disordered; it reads MSGPNPPGRE…EHVTGGPYVP (72 aa). The chain crosses the membrane as a helical span at residues 101 to 121; that stretch reads VVGVAAIIAAVALVVSVSLLV. The segment covering 128–139 has biased composition (polar residues); sequence KLATGDTTSSAP. Residues 128–213 form a disordered region; the sequence is KLATGDTTSS…TTTTPTGPRQ (86 aa). Residues 150–163 show a composition bias toward pro residues; it reads PAPPPPPPAPPPTT. Over residues 164–176 the composition is skewed to low complexity; it reads EIPTATETQTVTV. Over residues 177–193 the composition is skewed to pro residues; the sequence is TPPPPPPPATTTAPPPA.

It belongs to the MmpS family.

It is found in the cell membrane. The protein is Probable transport accessory protein MmpS3 (mmpS3) of Mycobacterium tuberculosis (strain CDC 1551 / Oshkosh).